The sequence spans 54 residues: U-reduvitoxin-Pr1a (54 aa).

The N-terminal stretch at 1–19 is a signal peptide; sequence MKLLGLLLLVFTFMALAFA. Cystine bridges form between cysteine 24–cysteine 39, cysteine 31–cysteine 44, and cysteine 38–cysteine 51.

It belongs to the venom Ptu1-like knottin family. In terms of tissue distribution, expressed by the venom gland (posterior main gland) (at protein level).

It is found in the secreted. Binds reversibly and blocks P/Q-type voltage-gated calcium channels (Cav). The chain is U-reduvitoxin-Pr1a from Platymeris rhadamanthus (Red spot assassin bug).